We begin with the raw amino-acid sequence, 128 residues long: uncharacterized protein (128 aa).

Residues 1-126 (MHHIELYVSD…DRIKVELVAP (126 aa)) enclose the VOC domain.

This is an uncharacterized protein from Bacillus subtilis (strain 168).